A 411-amino-acid chain; its full sequence is Adenylosuccinate synthetase (411 aa).

GTP is bound by residues 11–17 (GDEGKGK) and 39–41 (GHT). Catalysis depends on D12, which acts as the Proton acceptor. Residues D12 and G39 each contribute to the Mg(2+) site. IMP-binding positions include 12 to 15 (DEGK), 37 to 40 (NAGH), T121, R135, Q215, T230, and R294. H40 (proton donor) is an active-site residue. A substrate-binding site is contributed by 290–296 (TTTKRPR). Residues R296, 322-324 (KLD), and 400-402 (STS) each bind GTP.

Belongs to the adenylosuccinate synthetase family. Homodimer. Mg(2+) serves as cofactor.

Its subcellular location is the cytoplasm. It catalyses the reaction IMP + L-aspartate + GTP = N(6)-(1,2-dicarboxyethyl)-AMP + GDP + phosphate + 2 H(+). It participates in purine metabolism; AMP biosynthesis via de novo pathway; AMP from IMP: step 1/2. Plays an important role in the de novo pathway of purine nucleotide biosynthesis. Catalyzes the first committed step in the biosynthesis of AMP from IMP. The polypeptide is Adenylosuccinate synthetase (Helicobacter pylori (strain Shi470)).